Consider the following 249-residue polypeptide: Methionine aminopeptidase (249 aa).

His-77 is a substrate binding site. A divalent metal cation contacts are provided by Asp-94, Asp-105, and His-168. His-175 lines the substrate pocket. A divalent metal cation is bound by residues Glu-201 and Glu-232.

This sequence belongs to the peptidase M24A family. Methionine aminopeptidase type 1 subfamily. Monomer. Requires Co(2+) as cofactor. Zn(2+) is required as a cofactor. The cofactor is Mn(2+). Fe(2+) serves as cofactor.

It carries out the reaction Release of N-terminal amino acids, preferentially methionine, from peptides and arylamides.. Removes the N-terminal methionine from nascent proteins. The N-terminal methionine is often cleaved when the second residue in the primary sequence is small and uncharged (Met-Ala-, Cys, Gly, Pro, Ser, Thr, or Val). Requires deformylation of the N(alpha)-formylated initiator methionine before it can be hydrolyzed. This Clostridium perfringens (strain 13 / Type A) protein is Methionine aminopeptidase.